Reading from the N-terminus, the 696-residue chain is DNA ligase (696 aa).

NAD(+) contacts are provided by residues 36–40, 85–86, and glutamate 123; these read DAEYD and SL. Residue lysine 125 is the N6-AMP-lysine intermediate of the active site. Positions 146, 181, 319, and 343 each coordinate NAD(+). Zn(2+)-binding residues include cysteine 437, cysteine 440, cysteine 455, and cysteine 461. One can recognise a BRCT domain in the interval 618 to 696; it reads PEGTSLAGKT…EDGLKALLGL (79 aa).

This sequence belongs to the NAD-dependent DNA ligase family. LigA subfamily. Requires Mg(2+) as cofactor. Mn(2+) serves as cofactor.

The enzyme catalyses NAD(+) + (deoxyribonucleotide)n-3'-hydroxyl + 5'-phospho-(deoxyribonucleotide)m = (deoxyribonucleotide)n+m + AMP + beta-nicotinamide D-nucleotide.. DNA ligase that catalyzes the formation of phosphodiester linkages between 5'-phosphoryl and 3'-hydroxyl groups in double-stranded DNA using NAD as a coenzyme and as the energy source for the reaction. It is essential for DNA replication and repair of damaged DNA. The protein is DNA ligase of Bordetella pertussis (strain Tohama I / ATCC BAA-589 / NCTC 13251).